The sequence spans 792 residues: Probable G-protein coupled receptor 156 (792 aa).

The Extracellular segment spans residues 1–49 (MEPEINCSEFCDSFPGQELDRRPLHDLCKTTITDSQHGSADISPLSPAL). Asn-6 is a glycosylation site (N-linked (GlcNAc...) asparagine). Residues 50–70 (LGVIWTFLSCGLLLVLFFLAF) form a helical membrane-spanning segment. At 71 to 86 (TIRCRKNRIVKMSSPN) the chain is on the cytoplasmic side. Residues 87–107 (LNIVTLLGSCLTYSSAYLFGI) traverse the membrane as a helical segment. Topologically, residues 108–118 (QDALVGSSVEA) are extracellular. The chain crosses the membrane as a helical span at residues 119–139 (LIQTRLSLLCIGTTLVFGPIL). The Cytoplasmic portion of the chain corresponds to 140-164 (GKSWRLYKVFTQRVPDKRVIIKDLQ). Residues 165–185 (LLGLVAALVVADVILLVTWVL) form a helical membrane-spanning segment. The Extracellular portion of the chain corresponds to 186 to 222 (TDPIQCLQILGVSMKVTGRDVSCSLTNTHFCASRYSD). A helical transmembrane segment spans residues 223–243 (VWIALVLGCKGLLLLYGAYLA). The Cytoplasmic portion of the chain corresponds to 244–257 (GLTNHVSSPPVNQS). Residues 258–278 (LTIMVGVNLLLLTAGLLFVVT) form a helical membrane-spanning segment. Residues 279–287 (RYLHSWPNL) are Extracellular-facing. Residues 288 to 308 (VFGLTSGGIFVCTTTVNCCVF) traverse the membrane as a helical segment. Topologically, residues 309 to 792 (LPQLRQRKAF…FKDDLKPTLV (484 aa)) are cytoplasmic. Residues 354-390 (EXSCMERLLTEKNAVIESLQEQVSNAKEKLVKLMSAE) adopt a coiled-coil conformation. 3 disordered regions span residues 407-457 (GGPA…KYDM), 469-516 (GCSQ…EVLP), and 538-704 (DLGT…QRQP). Over residues 422 to 434 (AAAEDSLPASAAS) the composition is skewed to low complexity. Basic and acidic residues-rich tracts occupy residues 443–457 (SRRDXSPSPDQKYDM) and 474–486 (PKAEQSEGPERGN). The segment covering 554-567 (PWKSNTSGSPQKLS) has biased composition (polar residues). The segment covering 578–589 (VRRRRAAQRARS) has biased composition (basic residues). Positions 602 to 619 (QANNTVSGSQNGLIVQNR) are enriched in polar residues. The span at 620–635 (DSPRLDHHNARSKEPR) shows a compositional bias: basic and acidic residues. Positions 675 to 704 (PRQPSASAPAQSSTAPCLSSXPALPRQRQP) are enriched in low complexity.

Belongs to the G-protein coupled receptor 3 family. GABA-B receptor subfamily. Widely expressed throughout the brain and is particularly dense in the olfactory tubercles, islands of Calleja, nucleus accumbens, piriform cortex and all fields of the hippocampus.

The protein resides in the cell membrane. Functionally, orphan G-protein coupled receptor involved in the regulation of hair cell orientation in mechanosensory organs of the inner ear. It is required to trigger a 180 degree reversal in hair cell orientation, creating a virtual line of polarity reversal (LPR) across which stereociliary bundles are arranged in opposite orientations. In Rattus norvegicus (Rat), this protein is Probable G-protein coupled receptor 156 (Gpr156).